A 439-amino-acid polypeptide reads, in one-letter code: C4-dicarboxylate transport protein (439 aa).

Helical transmembrane passes span L10–P30, L45–M65, L77–V97, A145–L165, V185–M205, L223–T243, V290–L310, T332–F352, and I353–I373. The segment at L415–H439 is disordered.

The protein belongs to the dicarboxylate/amino acid:cation symporter (DAACS) (TC 2.A.23) family.

Its subcellular location is the cell inner membrane. Functionally, responsible for the transport of dicarboxylates such as succinate, fumarate, and malate from the periplasm across the membrane. The chain is C4-dicarboxylate transport protein from Verminephrobacter eiseniae (strain EF01-2).